We begin with the raw amino-acid sequence, 185 residues long: Protein GrpE (185 aa).

The segment at 1-44 (MSEEELTNGPGPEPQPEPLEVESAPLEAAPAGEPDKALLEAQQQ) is disordered.

The protein belongs to the GrpE family. Homodimer.

The protein resides in the cytoplasm. Participates actively in the response to hyperosmotic and heat shock by preventing the aggregation of stress-denatured proteins, in association with DnaK and GrpE. It is the nucleotide exchange factor for DnaK and may function as a thermosensor. Unfolded proteins bind initially to DnaJ; upon interaction with the DnaJ-bound protein, DnaK hydrolyzes its bound ATP, resulting in the formation of a stable complex. GrpE releases ADP from DnaK; ATP binding to DnaK triggers the release of the substrate protein, thus completing the reaction cycle. Several rounds of ATP-dependent interactions between DnaJ, DnaK and GrpE are required for fully efficient folding. The sequence is that of Protein GrpE from Methylococcus capsulatus (strain ATCC 33009 / NCIMB 11132 / Bath).